A 1729-amino-acid polypeptide reads, in one-letter code: RNA-directed RNA polymerase (1729 aa).

Positions histidine 59 to leucine 232 constitute an Alphavirus-like MT domain. Disordered stretches follow at residues asparagine 528 to proline 619 and serine 635 to arginine 663. Composition is skewed to polar residues over residues glutamine 538–valine 567 and phenylalanine 586–proline 617. The span at serine 635–arginine 652 shows a compositional bias: low complexity. The 94-residue stretch at serine 741–threonine 834 folds into the Fe2OG dioxygenase domain. Residues histidine 759, aspartate 761, and histidine 816 each coordinate Fe cation. Arginine 825 is a binding site for 2-oxoglutarate. Residues serine 841–leucine 862 form a disordered region. Residues leucine 957–isoleucine 1111 form the (+)RNA virus helicase ATP-binding domain. A (+)RNA virus helicase C-terminal domain is found at asparagine 1112–threonine 1247. The 108-residue stretch at arginine 1492–phenylalanine 1599 folds into the RdRp catalytic domain.

It belongs to the potexvirus/carlavirus RNA replication protein family. Fe(2+) serves as cofactor.

The enzyme catalyses RNA(n) + a ribonucleoside 5'-triphosphate = RNA(n+1) + diphosphate. It catalyses the reaction ATP + H2O = ADP + phosphate + H(+). Functionally, RNA replication. The central part of this protein possibly functions as an ATP-binding helicase. The sequence is that of RNA-directed RNA polymerase (ORF1) from Lolium latent virus (isolate Lolium/USA/US1/-) (LoLV).